The chain runs to 430 residues: Putative golgin subfamily A member 8D (430 aa).

Residues 2–217 (EWKLEQSMRE…LTAQLSLMAL (216 aa)) adopt a coiled-coil conformation. Disordered stretches follow at residues 138-158 (LREQ…QEER), 217-239 (LPGE…RPMP), 290-331 (PITK…GVAA), and 382-406 (PVQG…QDHQ). The span at 222–235 (HGGEHLDSEGEEAP) shows a compositional bias: basic and acidic residues. Residues 303-316 (PGGGHHQAGPGQGG) are compositionally biased toward gly residues.

It belongs to the GOLGA8 family.

This Homo sapiens (Human) protein is Putative golgin subfamily A member 8D (GOLGA8DP).